A 560-amino-acid polypeptide reads, in one-letter code: Eukaryotic translation initiation factor 3 subunit D-1 (560 aa).

The interval 98-166 (VQKPPHQRGR…RGPPPKMRES (69 aa)) is disordered. The span at 100 to 121 (KPPHQRGRFRNMRNSRSGRGRN) shows a compositional bias: basic residues. Threonine 128 carries the post-translational modification Phosphothreonine. A compositionally biased stretch (basic residues) spans 147–156 (GRGMGKKFGH). The segment at 291–305 (EFDLLTVNESSVEPP) is RNA gate.

It belongs to the eIF-3 subunit D family. In terms of assembly, component of the eukaryotic translation initiation factor 3 (eIF-3) complex. The eIF-3 complex interacts with pix.

Its subcellular location is the cytoplasm. Its function is as follows. mRNA cap-binding component of the eukaryotic translation initiation factor 3 (eIF-3) complex, which is involved in protein synthesis of a specialized repertoire of mRNAs and, together with other initiation factors, stimulates binding of mRNA and methionyl-tRNAi to the 40S ribosome. The eIF-3 complex specifically targets and initiates translation of a subset of mRNAs involved in cell proliferation. In the eIF-3 complex, eif3d specifically recognizes and binds the 7-methylguanosine cap of a subset of mRNAs. This Drosophila melanogaster (Fruit fly) protein is Eukaryotic translation initiation factor 3 subunit D-1.